We begin with the raw amino-acid sequence, 462 residues long: Sugar transporter ERD6-like 12 (462 aa).

Helical transmembrane passes span 25–45 (LLIF…AAIG), 62–82 (LAQF…GAIF), 101–121 (LFCI…WLDM), 124–144 (FLVG…IAEI), 151–171 (GAFT…VYYF), 179–199 (TLAI…FFIP), 262–282 (LTIG…GISS), 297–317 (IGMM…LILV), 326–346 (LMTS…AFGV), 358–378 (IFCF…MGAL), 399–419 (VTIA…FMLV), and 424–444 (GTFI…WCLV).

It belongs to the major facilitator superfamily. Sugar transporter (TC 2.A.1.1) family.

It is found in the membrane. Its function is as follows. Sugar transporter. The chain is Sugar transporter ERD6-like 12 (SUGTL5) from Arabidopsis thaliana (Mouse-ear cress).